We begin with the raw amino-acid sequence, 402 residues long: Argininosuccinate synthase (402 aa).

9-17 is an ATP binding site; it reads AYSGGLDTS. L-citrulline is bound at residue tyrosine 86. Glycine 116 is an ATP binding site. Residues threonine 118, asparagine 122, and aspartate 123 each coordinate L-aspartate. Asparagine 122 serves as a coordination point for L-citrulline. Residues arginine 126, serine 174, serine 183, glutamate 259, and tyrosine 271 each coordinate L-citrulline.

The protein belongs to the argininosuccinate synthase family. Type 1 subfamily. In terms of assembly, homotetramer.

The protein localises to the cytoplasm. It carries out the reaction L-citrulline + L-aspartate + ATP = 2-(N(omega)-L-arginino)succinate + AMP + diphosphate + H(+). It participates in amino-acid biosynthesis; L-arginine biosynthesis; L-arginine from L-ornithine and carbamoyl phosphate: step 2/3. The polypeptide is Argininosuccinate synthase (Geobacillus sp. (strain WCH70)).